Consider the following 70-residue polypeptide: Protein SlyX homolog (70 aa).

It belongs to the SlyX family.

The polypeptide is Protein SlyX homolog (Shewanella putrefaciens (strain CN-32 / ATCC BAA-453)).